The primary structure comprises 264 residues: 3-methyl-2-oxobutanoate hydroxymethyltransferase (264 aa).

Residues Asp-45 and Asp-84 each coordinate Mg(2+). 3-methyl-2-oxobutanoate contacts are provided by residues 45–46 (DS), Asp-84, and Lys-112. Position 114 (Glu-114) interacts with Mg(2+). The Proton acceptor role is filled by Glu-181.

It belongs to the PanB family. As to quaternary structure, homodecamer; pentamer of dimers. Requires Mg(2+) as cofactor.

The protein resides in the cytoplasm. The enzyme catalyses 3-methyl-2-oxobutanoate + (6R)-5,10-methylene-5,6,7,8-tetrahydrofolate + H2O = 2-dehydropantoate + (6S)-5,6,7,8-tetrahydrofolate. The protein operates within cofactor biosynthesis; (R)-pantothenate biosynthesis; (R)-pantoate from 3-methyl-2-oxobutanoate: step 1/2. Its function is as follows. Catalyzes the reversible reaction in which hydroxymethyl group from 5,10-methylenetetrahydrofolate is transferred onto alpha-ketoisovalerate to form ketopantoate. The polypeptide is 3-methyl-2-oxobutanoate hydroxymethyltransferase (Aeromonas hydrophila subsp. hydrophila (strain ATCC 7966 / DSM 30187 / BCRC 13018 / CCUG 14551 / JCM 1027 / KCTC 2358 / NCIMB 9240 / NCTC 8049)).